The chain runs to 44 residues: Large ribosomal subunit protein bL34 (44 aa).

2 stretches are compositionally biased toward basic residues: residues 1–14 (MKRT…KRQK) and 31–44 (LSAR…RLAV). A disordered region spans residues 1-44 (MKRTLGGTTRKRQKTSGFRARMRTASGRRVLSARRRRGRHRLAV).

The protein belongs to the bacterial ribosomal protein bL34 family.

The chain is Large ribosomal subunit protein bL34 from Gloeobacter violaceus (strain ATCC 29082 / PCC 7421).